The chain runs to 898 residues: MQTHEIRKRFLDHFVKAGHTEVPSASVILDDPNLLFVNAGMVQFVPYFLGQRTPPWDRATSVQKCIRTPDIDEVGITTRHNTFFQMAGNFSFGDYFKKGAIELAWSLLTNPVSEGGYGFDPERLWATVYLDDDEAIELWQEVAGLPAERIQRRGMADNYWSMGIPGPCGPCSEIYYDRGPDYGIDGGPEANEDRYIEIWNLVFMQNERGEGTSKDDFEILGPLPRKNIDTGMGVERIACLLQGVDNVYETDLVRPVIDLVAGIAPRGYGQGNHTDDVRYRIIGDHSRTAAIIIGDGVTPGNEGRGYVLRRLLRRIIRAAKLLGVEQPIMGELMATVRDEMGPSYPELVTDFERINRIAIAEETAFNRTLTAGSRLFEDAAETTRKAGSTVLSGDDAFTLHDTFGFPIDLTLEMAAEAGLSVDEEGFRGLMAEQRRRAKADAAARKQAHTDLSAYRELVDAGPTEFTGFDELTTEARILGIFVDGRRVPVVSHVQGGDAPGRVELILNRSPFYAESGGQIADEGTVTGTGASQTAKAAVTDVQKIAKTLWAHRITVESGEFVEGDTIVAAVDPRWRHGATQGHSGTHMVHAALRQVLGPNAVQAGSLNRPGYLRFDFNWQGALSDDQRSQIEEVTNEAVEADYEVHNFTTELEKAKSMGAMALFGENYPDEVRVVEIGGPFSIELCGGTHVRSSAQIGPVTILGESSVGSGVRRVEAYVGLDSFRHLAKERALMAGLASSLKVPSDEVPARVENLVERLRAAEKELDRLRLVNARAAAANAAAGAEQIGGIRLVAQRMAGGISAGDLRSLVGDIRGKLGSDPAVVALISEADDDTVPFVVAVNQAAQDRGLRANDLVKVLGAAVNGRGGGKADLAQGSGKGAAGIDAALAAIRAEMGRS.

Zn(2+) is bound by residues His-582, His-586, Cys-685, and His-689.

The protein belongs to the class-II aminoacyl-tRNA synthetase family. The cofactor is Zn(2+).

The protein resides in the cytoplasm. It catalyses the reaction tRNA(Ala) + L-alanine + ATP = L-alanyl-tRNA(Ala) + AMP + diphosphate. Catalyzes the attachment of alanine to tRNA(Ala) in a two-step reaction: alanine is first activated by ATP to form Ala-AMP and then transferred to the acceptor end of tRNA(Ala). Also edits incorrectly charged Ser-tRNA(Ala) and Gly-tRNA(Ala) via its editing domain. This chain is Alanine--tRNA ligase, found in Mycolicibacterium gilvum (strain PYR-GCK) (Mycobacterium gilvum (strain PYR-GCK)).